Consider the following 885-residue polypeptide: DNA-directed RNA polymerase subunit Rpo1N (885 aa).

Residues Cys-60, Cys-63, Cys-70, His-73, Cys-100, Cys-103, Cys-150, and Cys-153 each coordinate Zn(2+). Positions 464, 466, and 468 each coordinate Mg(2+).

Belongs to the RNA polymerase beta' chain family. In terms of assembly, part of the RNA polymerase complex. Mg(2+) is required as a cofactor. Zn(2+) serves as cofactor.

It localises to the cytoplasm. The enzyme catalyses RNA(n) + a ribonucleoside 5'-triphosphate = RNA(n+1) + diphosphate. In terms of biological role, DNA-dependent RNA polymerase (RNAP) catalyzes the transcription of DNA into RNA using the four ribonucleoside triphosphates as substrates. Forms the clamp head domain. In Thermoplasma acidophilum (strain ATCC 25905 / DSM 1728 / JCM 9062 / NBRC 15155 / AMRC-C165), this protein is DNA-directed RNA polymerase subunit Rpo1N.